We begin with the raw amino-acid sequence, 68 residues long: DNA-directed RNA polymerase subunit omega (68 aa).

Belongs to the RNA polymerase subunit omega family. In terms of assembly, the RNAP catalytic core consists of 2 alpha, 1 beta, 1 beta' and 1 omega subunit. When a sigma factor is associated with the core the holoenzyme is formed, which can initiate transcription.

It carries out the reaction RNA(n) + a ribonucleoside 5'-triphosphate = RNA(n+1) + diphosphate. Its function is as follows. Promotes RNA polymerase assembly. Latches the N- and C-terminal regions of the beta' subunit thereby facilitating its interaction with the beta and alpha subunits. In Desulforapulum autotrophicum (strain ATCC 43914 / DSM 3382 / VKM B-1955 / HRM2) (Desulfobacterium autotrophicum), this protein is DNA-directed RNA polymerase subunit omega.